Reading from the N-terminus, the 313-residue chain is UDP-N-acetylglucosamine 3-dehydrogenase (313 aa).

NAD(+) is bound by residues His-13, Leu-14, and Arg-38.

This sequence belongs to the Gfo/Idh/MocA family. In terms of assembly, exists in multiple oligomeric states.

The catalysed reaction is UDP-N-acetyl-alpha-D-glucosamine + NAD(+) = UDP-2-acetamido-3-dehydro-2-deoxy-alpha-D-glucopyranose + NADH + H(+). It functions in the pathway bacterial outer membrane biogenesis; LPS lipid A biosynthesis. Its function is as follows. Oxidoreductase involved in the synthesis of 2,3-diamino-2,3-dideoxy-D-glucopyranose (GlcN3N), which is a component of lipid A in some species. Catalyzes the NAD(+)-dependent oxidation of the glucosamine 3-position of UDP-N-acetyl-glucosamine (UDP-GlcNAc) to a ketone moiety, forming UDP-2-acetamido-3-dehydro-2-deoxy-alpha-D-glucopyranose (UDP-3-oxo-GlcNAc). Is specific for UDP-GlcNAc, no activity is observed with UDP-glucose (UDP-Glc), UDP-glucoronic acid (UDP-GlcA), UDP-galactose (UDP-Gal) and UDP-N-acetylgalactosamine (UDP-GalNAc). Cannot use FAD(+) and NADP(+). In Acidithiobacillus ferrooxidans (strain ATCC 23270 / DSM 14882 / CIP 104768 / NCIMB 8455) (Ferrobacillus ferrooxidans (strain ATCC 23270)), this protein is UDP-N-acetylglucosamine 3-dehydrogenase.